Reading from the N-terminus, the 219-residue chain is Flagellar biosynthetic protein FliZ (219 aa).

The signal sequence occupies residues Met-1 to Ala-26. Residues Lys-41–Asp-61 show a composition bias toward basic and acidic residues. The tract at residues Lys-41–Glu-62 is disordered. A helical transmembrane segment spans residues Val-71–Leu-96. The span at Leu-200–Lys-212 shows a compositional bias: basic and acidic residues. Positions Leu-200–Glu-219 are disordered.

It is found in the cell membrane. In terms of biological role, may be a structural component of the flagellum that anchors the rod to the membrane. The sequence is that of Flagellar biosynthetic protein FliZ (fliZ) from Bacillus subtilis (strain 168).